The following is a 365-amino-acid chain: 1-acyl-sn-glycerol-3-phosphate acyltransferase epsilon (365 aa).

Residues 15–35 (LLPSVLLLGSAPTYLLAWTLW) traverse the membrane as a helical segment. An HXXXXD motif motif is present at residues 93 to 98 (HQSTVD). The chain crosses the membrane as a helical span at residues 345–365 (LYMGTWLYGTLLGCLWFVIKA).

Belongs to the 1-acyl-sn-glycerol-3-phosphate acyltransferase family. Widely expressed.

The protein localises to the endoplasmic reticulum membrane. It localises to the nucleus envelope. It is found in the mitochondrion. The enzyme catalyses a 1-acyl-sn-glycero-3-phosphate + an acyl-CoA = a 1,2-diacyl-sn-glycero-3-phosphate + CoA. The catalysed reaction is 1-(9Z-octadecenoyl)-sn-glycero-3-phosphate + tetradecanoyl-CoA = 1-(9Z)-octadecenoyl-2-tetradecanoyl-sn-glycero-3-phosphate + CoA. It catalyses the reaction pentadecanoyl-CoA + 1-(9Z-octadecenoyl)-sn-glycero-3-phosphate = 1-(9Z)-octadecenoyl-2-pentadecanoyl-sn-glycero-3-phosphate + CoA. It carries out the reaction 1-(9Z-octadecenoyl)-sn-glycero-3-phosphate + octadecanoyl-CoA = 1-(9Z-octadecenoyl)-2-octadecanoyl-sn-glycero-3-phosphate + CoA. The enzyme catalyses nonadecanoyl-CoA + 1-(9Z-octadecenoyl)-sn-glycero-3-phosphate = 1-(9Z)-octadecenoyl-2-nonadecanoyl-sn-glycero-3-phosphate + CoA. The catalysed reaction is 1-(9Z-octadecenoyl)-sn-glycero-3-phosphoethanolamine + (9Z)-octadecenoyl-CoA = 1,2-di-(9Z-octadecenoyl)-sn-glycero-3-phosphoethanolamine + CoA. It catalyses the reaction 1-(9Z-octadecenoyl)-sn-glycero-3-phosphocholine + (9Z)-octadecenoyl-CoA = 1,2-di-(9Z-octadecenoyl)-sn-glycero-3-phosphocholine + CoA. It carries out the reaction 1-(9Z-octadecenoyl)-sn-glycero-3-phospho-(1D-myo-inositol) + (5Z,8Z,11Z,14Z)-eicosatetraenoyl-CoA = 1-(9Z-octadecenoyl)-2-(5Z,8Z,11Z,14Z-eicosatetraenoyl)-sn-glycero-3-phospho-1D-myo-inositol + CoA. The enzyme catalyses 1-(9Z-octadecenoyl)-sn-glycero-3-phospho-L-serine + (9Z)-octadecenoyl-CoA = 1,2-di-(9Z)-octadecenoyl-sn-glycero-3-phospho-L-serine + CoA. The catalysed reaction is 1-(9Z-octadecenoyl)-sn-glycero-3-phospho-L-serine + (5Z,8Z,11Z,14Z)-eicosatetraenoyl-CoA = 1-(9Z-octadecenoyl)-2-(5Z,8Z,11Z,14Z-eicosatetraenoyl)-sn-glycero-3-phospho-L-serine + CoA. It catalyses the reaction 1-hexadecanoyl-sn-glycero-3-phosphate + (9Z)-octadecenoyl-CoA = 1-hexadecanoyl-2-(9Z-octadecenoyl)-sn-glycero-3-phosphate + CoA. It carries out the reaction 1-heptadecanoyl-sn-glycero-3-phosphate + (9Z)-octadecenoyl-CoA = 1-heptadecanoyl-2-(9Z)-octadecenoyl-sn-glycero-3-phosphate + CoA. The enzyme catalyses 1-(5Z,8Z,11Z,14Z-eicosatetraenoyl)-sn-glycero-3-phosphate + (9Z)-octadecenoyl-CoA = 1-(5Z,8Z,11Z,14Z)-eicosatetraenoyl-2-(9Z)-octadecenoyl-sn-glycero-3-phosphate + CoA. The catalysed reaction is 1-octadecanoyl-sn-glycero-3-phosphate + (9Z)-octadecenoyl-CoA = 1-octadecanoyl-2-(9Z-octadecenoyl)-sn-glycero-3-phosphate + CoA. It catalyses the reaction 1-(9Z-octadecenoyl)-sn-glycero-3-phosphate + (5Z,8Z,11Z,14Z)-eicosatetraenoyl-CoA = 1-(9Z)-octadecenoyl-2-(5Z,8Z,11Z,14Z)-eicosatetraenoyl-sn-glycero-3-phosphate + CoA. It carries out the reaction heptadecanoyl-CoA + 1-(9Z-octadecenoyl)-sn-glycero-3-phosphate = 1-(9Z)-octadecenoyl-2-heptadecanoyl-sn-glycero-3-phosphate + CoA. The enzyme catalyses 1-(9Z-octadecenoyl)-sn-glycero-3-phosphocholine + (5Z,8Z,11Z,14Z)-eicosatetraenoyl-CoA = 1-(9Z)-octadecenoyl-2-(5Z,8Z,11Z,14Z)-icosatetraenoyl-sn-glycero-3-phosphocholine + CoA. The catalysed reaction is 1-(9Z-octadecenoyl)-sn-glycero-3-phosphate + (9Z)-octadecenoyl-CoA = 1,2-di-(9Z-octadecenoyl)-sn-glycero-3-phosphate + CoA. It catalyses the reaction 1-(9Z-octadecenoyl)-sn-glycero-3-phosphate + hexadecanoyl-CoA = 1-hexadecanoyl-2-(9Z-octadecenoyl)-sn-glycero-3-phosphate + CoA. It functions in the pathway phospholipid metabolism; CDP-diacylglycerol biosynthesis; CDP-diacylglycerol from sn-glycerol 3-phosphate: step 2/3. In terms of biological role, converts 1-acyl-sn-glycerol-3-phosphate (lysophosphatidic acid or LPA) into 1,2-diacyl-sn-glycerol-3-phosphate (phosphatidic acid or PA) by incorporating an acyl moiety at the sn-2 position of the glycerol backbone. Acts on LPA containing saturated or unsaturated fatty acids C15:0-C20:4 at the sn-1 position using C18:1-CoA as the acyl donor. Also acts on lysophosphatidylethanolamine using oleoyl-CoA, but not arachidonoyl-CoA, and lysophosphatidylinositol using arachidonoyl-CoA, but not oleoyl-CoA. Activity toward lysophosphatidylglycerol not detectable. The chain is 1-acyl-sn-glycerol-3-phosphate acyltransferase epsilon (Agpat5) from Mus musculus (Mouse).